Here is a 269-residue protein sequence, read N- to C-terminus: Protein MrkE (269 aa).

In terms of domain architecture, Response regulatory spans 59 to 173; it reads KVIIVEDEFL…RIINMLQKLT (115 aa). Aspartate 110 is modified (4-aspartylphosphate). Residues 197–269 enclose the HTH LytTR-type domain; sequence INLIKDERII…VAQVSIANRF (73 aa).

Its function is as follows. May be involved in the regulation of fimbrial expression. The polypeptide is Protein MrkE (mrkE) (Klebsiella pneumoniae).